Reading from the N-terminus, the 215-residue chain is Cytidylate kinase (215 aa).

Gly10 to Thr18 is an ATP binding site.

This sequence belongs to the cytidylate kinase family. Type 1 subfamily.

Its subcellular location is the cytoplasm. It carries out the reaction CMP + ATP = CDP + ADP. The enzyme catalyses dCMP + ATP = dCDP + ADP. The chain is Cytidylate kinase from Bartonella tribocorum (strain CIP 105476 / IBS 506).